Reading from the N-terminus, the 308-residue chain is MSSISNVYHDYSSFSNATTFSQVYQNFNQLDNLNVFEKLWGSYYYYMANDLFATGLLFFLTHEIFYFGRCLPWAIIDRIPYFRKWKIQDEKIPSDKEQWECLKSVLTSHFLVEAFPIWFFHPLCQKIGISYQVPFPKITDMLIQWAVFFVLEDTWHYWFHRGLHYGVFYKYIHKQHHRYAAPFGLAAEYAHPVEVALLGLGTVGIPIVWCLITGNLHLFTVSIWIILRLFQAVDAHSGYEFPWSLHNFLPFWAGADHHDEHHHYFIGGYSSSFRWWDFILDTEAGPKAKKGREDKVKQNVEKLQKKNL.

A helical membrane pass occupies residues Leu-56–Ile-76. The Fatty acid hydroxylase domain occupies Trp-145–Thr-282. Positions His-160–His-164 match the Histidine box-1 motif. The Histidine box-2 motif lies at His-173–His-177. Positions His-257–His-263 match the Histidine box-3 motif.

It belongs to the sterol desaturase family. The cofactor is Fe cation.

Its subcellular location is the endoplasmic reticulum membrane. The enzyme catalyses 4,4-dimethyl-5alpha-cholest-7-en-3beta-ol + 6 Fe(II)-[cytochrome b5] + 3 O2 + 5 H(+) = 4alpha-carboxy-4beta-methyl-5alpha-cholest-7-ene-3beta-ol + 6 Fe(III)-[cytochrome b5] + 4 H2O. It participates in steroid biosynthesis; zymosterol biosynthesis; zymosterol from lanosterol: step 3/6. Its function is as follows. C-4 methylsterol oxidase; part of the third module of ergosterol biosynthesis pathway that includes the late steps of the pathway. ERG25 is a catalytic component of the C-4 demethylation complex that catalyzes the conversion of 4,4-dimethylfecosterol into fecosterol via 4-methylfecosterol. Catalyzes the three-step monooxygenation required for the demethylation of 4,4-dimethyl and 4alpha-methylsterols. The third module or late pathway involves the ergosterol synthesis itself through consecutive reactions that mainly occur in the endoplasmic reticulum (ER) membrane. Firstly, the squalene synthase ERG9 catalyzes the condensation of 2 farnesyl pyrophosphate moieties to form squalene, which is the precursor of all steroids. Squalene synthase is crucial for balancing the incorporation of farnesyl diphosphate (FPP) into sterol and nonsterol isoprene synthesis. Secondly, the squalene epoxidase ERG1 catalyzes the stereospecific oxidation of squalene to (S)-2,3-epoxysqualene, which is considered to be a rate-limiting enzyme in steroid biosynthesis. Then, the lanosterol synthase ERG7 catalyzes the cyclization of (S)-2,3 oxidosqualene to lanosterol, a reaction that forms the sterol core. In the next steps, lanosterol is transformed to zymosterol through a complex process involving various demethylation, reduction and desaturation reactions. The lanosterol 14-alpha-demethylase ERG11 (also known as CYP51) catalyzes C14-demethylation of lanosterol to produce 4,4'-dimethyl cholesta-8,14,24-triene-3-beta-ol, which is critical for ergosterol biosynthesis. The C-14 reductase ERG24 reduces the C14=C15 double bond of 4,4-dimethyl-cholesta-8,14,24-trienol to produce 4,4-dimethyl-cholesta-8,24-dienol. 4,4-dimethyl-cholesta-8,24-dienol is substrate of the C-4 demethylation complex ERG25-ERG26-ERG27 in which ERG25 catalyzes the three-step monooxygenation required for the demethylation of 4,4-dimethyl and 4alpha-methylsterols, ERG26 catalyzes the oxidative decarboxylation that results in a reduction of the 3-beta-hydroxy group at the C-3 carbon to an oxo group, and ERG27 is responsible for the reduction of the keto group on the C-3. ERG28 has a role as a scaffold to help anchor ERG25, ERG26 and ERG27 to the endoplasmic reticulum and ERG29 regulates the activity of the iron-containing C4-methylsterol oxidase ERG25. Then, the sterol 24-C-methyltransferase ERG6 catalyzes the methyl transfer from S-adenosyl-methionine to the C-24 of zymosterol to form fecosterol. The C-8 sterol isomerase ERG2 catalyzes the reaction which results in unsaturation at C-7 in the B ring of sterols and thus converts fecosterol to episterol. The sterol-C5-desaturase ERG3 then catalyzes the introduction of a C-5 double bond in the B ring to produce 5-dehydroepisterol. The C-22 sterol desaturase ERG5 further converts 5-dehydroepisterol into ergosta-5,7,22,24(28)-tetraen-3beta-ol by forming the C-22(23) double bond in the sterol side chain. Finally, ergosta-5,7,22,24(28)-tetraen-3beta-ol is substrate of the C-24(28) sterol reductase ERG4 to produce ergosterol. The sequence is that of C-4 methylsterol oxidase from Candida albicans (strain SC5314 / ATCC MYA-2876) (Yeast).